A 211-amino-acid chain; its full sequence is ATP phosphoribosyltransferase (211 aa).

This sequence belongs to the ATP phosphoribosyltransferase family. Short subfamily. In terms of assembly, heteromultimer composed of HisG and HisZ subunits.

It localises to the cytoplasm. The enzyme catalyses 1-(5-phospho-beta-D-ribosyl)-ATP + diphosphate = 5-phospho-alpha-D-ribose 1-diphosphate + ATP. It functions in the pathway amino-acid biosynthesis; L-histidine biosynthesis; L-histidine from 5-phospho-alpha-D-ribose 1-diphosphate: step 1/9. Its function is as follows. Catalyzes the condensation of ATP and 5-phosphoribose 1-diphosphate to form N'-(5'-phosphoribosyl)-ATP (PR-ATP). Has a crucial role in the pathway because the rate of histidine biosynthesis seems to be controlled primarily by regulation of HisG enzymatic activity. The polypeptide is ATP phosphoribosyltransferase (Bacillus mycoides (strain KBAB4) (Bacillus weihenstephanensis)).